The following is a 471-amino-acid chain: ATP synthase subunit beta (471 aa).

153–160 (GGAGVGKT) serves as a coordination point for ATP.

Belongs to the ATPase alpha/beta chains family. As to quaternary structure, F-type ATPases have 2 components, CF(1) - the catalytic core - and CF(0) - the membrane proton channel. CF(1) has five subunits: alpha(3), beta(3), gamma(1), delta(1), epsilon(1). CF(0) has four main subunits: a(1), b(1), b'(1) and c(9-12).

The protein resides in the cell inner membrane. It carries out the reaction ATP + H2O + 4 H(+)(in) = ADP + phosphate + 5 H(+)(out). In terms of biological role, produces ATP from ADP in the presence of a proton gradient across the membrane. The catalytic sites are hosted primarily by the beta subunits. This is ATP synthase subunit beta from Methylibium petroleiphilum (strain ATCC BAA-1232 / LMG 22953 / PM1).